A 424-amino-acid chain; its full sequence is MLQDIMNTKKIKLHDCHFGSPLCDPSPAPHLLSSAAAAGLSFHPGLVSSAAQHQQHGAGGWLHEEYYAPRSSPPSSLLAQTCVGSNATAFYAAENLPQFDFPALGTAAAAAAKAPFRSSESELYRPVDPLLLRADHSVRTYYVRPQKRDSGERTPLPPPSQQQHQDRIHGLFAGAPTTRLLSGEPKIHLFPPQVAAKPILPAMDAPSLQNQMENQLTRNCIGAATPVTPTGNLAGSGAPSKTRIRWTQDLHERFVDCVNQLGGADKATPKGILKLMNSDGLTIYHIKSHLQKYRIAKYMPASSEGKQLEKRATGNDMQNLDPKTGMQITEALRVQLDVQRRLHEQLEIQRNLQLRIEEQGKRLQKMFEDQLKASRSVMEPQELDDVVAFAAGDGDDDAFDDVDVQLLAVAGSGYDDAGFQSKIS.

Residues 144 to 165 form a disordered region; sequence RPQKRDSGERTPLPPPSQQQHQ. Residues 238-298 form the HTH myb-type domain; the sequence is APSKTRIRWT…HLQKYRIAKY (61 aa). A DNA-binding region (H-T-H motif) is located at residues 269 to 294; the sequence is PKGILKLMNSDGLTIYHIKSHLQKYR. Residues 342-347 carry the LHEQLE motif; it reads LHEQLE. Residues 342-391 are a coiled coil; that stretch reads LHEQLEIQRNLQLRIEEQGKRLQKMFEDQLKASRSVMEPQELDDVVAFAA.

The protein belongs to the MYB-CC family. As to quaternary structure, homodimer. Interacts with PHR2 in the nucleus. Interacts with SPX1 and SPX2 in the nucleus; these interactions prevent binding to the promoters of target genes, thus regulating negatively leaf inclination in response to phosphate (Pi) starvation.

It localises to the nucleus. Transcription factor binding to specific DNA sequences of target genes promoters, such as the motif R1BS 5'-NAKATNCN-3' and the motif P1BS 5'-GNATATNC-3' to trigger their expression. Nitrate-induced component involved in modulating phosphate (Pi) response and homeostasis together with PHR2; activates directly the expression of Pi starvation-induced (PSI) genes upon nitrate disponibility, thus triggering the nitrate-induced phosphate response (NIPR) promoting Pi uptake activity. Involved in the shoot architecture; positively regulates leaf inclination by affecting lamina joint cell elongation via the direct promotion of ILI4/BU1 and BC1 genes expression, especially in response to phosphate (Pi) availability. Regulates both brassinolide (BL) biosynthesis and signaling by directly activating BL-biosynthesis and signaling genes. The sequence is that of Myb family transcription factor RLI1 from Oryza sativa subsp. indica (Rice).